The chain runs to 191 residues: Protein DMP10 (191 aa).

The next 4 helical transmembrane spans lie at 15-35, 48-68, 114-134, and 158-178; these read FANL…PSFS, LLTI…SFTD, LSFV…ALAV, and LMIK…FAIF.

It belongs to the plant DMP1 protein family. Restricted to flowers.

The protein resides in the membrane. In terms of biological role, involved in membrane remodeling. The protein is Protein DMP10 of Arabidopsis thaliana (Mouse-ear cress).